The primary structure comprises 376 residues: Chaperone protein DnaJ (376 aa).

The 66-residue stretch at 5–70 folds into the J domain; the sequence is DYYEVLGVAR…NKRRMYDSHG (66 aa). The segment at 132 to 209 adopts a CR-type zinc-finger fold; the sequence is GVERRIEIPT…CHGNGRVEED (78 aa). Zn(2+) contacts are provided by Cys145, Cys148, Cys161, Cys164, Cys183, Cys186, Cys197, and Cys200. 4 CXXCXGXG motif repeats span residues 145–152, 161–168, 183–190, and 197–204; these read CGDCDGSG, CNVCHGRG, CHNCGGRG, and CKTCHGNG. Residues 223 to 242 form a disordered region; that stretch reads GDRIRLSGEGEAGPAGTPPG.

This sequence belongs to the DnaJ family. As to quaternary structure, homodimer. It depends on Zn(2+) as a cofactor.

Its subcellular location is the cytoplasm. Participates actively in the response to hyperosmotic and heat shock by preventing the aggregation of stress-denatured proteins and by disaggregating proteins, also in an autonomous, DnaK-independent fashion. Unfolded proteins bind initially to DnaJ; upon interaction with the DnaJ-bound protein, DnaK hydrolyzes its bound ATP, resulting in the formation of a stable complex. GrpE releases ADP from DnaK; ATP binding to DnaK triggers the release of the substrate protein, thus completing the reaction cycle. Several rounds of ATP-dependent interactions between DnaJ, DnaK and GrpE are required for fully efficient folding. Also involved, together with DnaK and GrpE, in the DNA replication of plasmids through activation of initiation proteins. This Stenotrophomonas maltophilia (strain R551-3) protein is Chaperone protein DnaJ.